Reading from the N-terminus, the 269-residue chain is NAD kinase (269 aa).

The active-site Proton acceptor is aspartate 45. NAD(+) is bound by residues 45–46, 122–123, arginine 149, aspartate 151, and alanine 186; these read DG and NE.

The protein belongs to the NAD kinase family. The cofactor is a divalent metal cation.

It is found in the cytoplasm. It carries out the reaction NAD(+) + ATP = ADP + NADP(+) + H(+). Functionally, involved in the regulation of the intracellular balance of NAD and NADP, and is a key enzyme in the biosynthesis of NADP. Catalyzes specifically the phosphorylation on 2'-hydroxyl of the adenosine moiety of NAD to yield NADP. The sequence is that of NAD kinase from Staphylococcus aureus (strain Mu3 / ATCC 700698).